A 326-amino-acid chain; its full sequence is Microtubule-associated protein RP/EB family member 2 (326 aa).

S9 carries the phosphoserine modification. One can recognise a Calponin-homology (CH) domain in the interval T56–D158. Residue Y166 is modified to Phosphotyrosine. Disordered stretches follow at residues E170–L239 and Y297–Y326. The DCTN1-binding stretch occupies residues Q186–Y326. The span at S199–S233 shows a compositional bias: low complexity. 2 positions are modified to phosphoserine: S218 and S235. The 71-residue stretch at S235–Q305 folds into the EB1 C-terminal domain. The tract at residues E258–E301 is APC-binding. Residues D300–E312 are compositionally biased toward acidic residues. Low complexity predominate over residues D317–Y326.

The protein belongs to the MAPRE family. Interacts with DCTN1. Interacts with APC (via C-terminal). Interacts with monomeric and polymerized tubulin. Interacts with SLAIN1. Interacts (via the N-terminal region) with BAG1. Interacts with ASB14. In terms of processing, ubiquitinated in an ASB14-dependent manner; leading to proteasomal degradation. Post-translationally, phosphorylated at Ser-235 by CK2 leading to enhanced cell adhesion. Phosphorylated by CDK1 and AURKB during mitosis reduces the binding affinity of MAPRE2 for microtubules. As to expression, expressed during early stages of apico-basal epithelial differentiation but down-regulated in most cells at later stages.

It is found in the cytoplasm. The protein localises to the cytoskeleton. Its subcellular location is the spindle. Functionally, adapter protein that is involved in microtubule polymerization, and spindle function by stabilizing microtubules and anchoring them at centrosomes. Therefore, ensures mitotic progression and genome stability. Acts as a central regulator of microtubule reorganization in apico-basal epithelial differentiation. Plays a role during oocyte meiosis by regulating microtubule dynamics. Participates in neurite growth by interacting with plexin B3/PLXNB3 and microtubule reorganization during apico-basal epithelial differentiation. Plays also an essential role for cell migration and focal adhesion dynamics. Mechanistically, recruits HAX1 to microtubules in order to regulate focal adhesion dynamics. This is Microtubule-associated protein RP/EB family member 2 (Mapre2) from Mus musculus (Mouse).